A 1551-amino-acid polypeptide reads, in one-letter code: Pentafunctional AROM polypeptide 1 (1551 aa).

The interval 1–379 (MSIEKVSILG…YESKAHQIFK (379 aa)) is 3-dehydroquinate synthase. NAD(+) is bound by residues 42-44 (DTN), 80-83 (ENHK), 111-113 (GGV), and D116. Residue R127 participates in 7-phospho-2-dehydro-3-deoxy-D-arabino-heptonate binding. Residue 136–137 (TT) participates in NAD(+) binding. 2 residues coordinate 7-phospho-2-dehydro-3-deoxy-D-arabino-heptonate: D143 and K149. K158 contacts NAD(+). N159 provides a ligand contact to 7-phospho-2-dehydro-3-deoxy-D-arabino-heptonate. NAD(+)-binding positions include 176–179 (FLQT) and N187. E191 serves as a coordination point for Zn(2+). Residues 191-194 (EVVK) and K243 contribute to the 7-phospho-2-dehydro-3-deoxy-D-arabino-heptonate site. The active-site Proton acceptor; for 3-dehydroquinate synthase activity is E253. Residues 257–261 (RNLLN) and H264 each bind 7-phospho-2-dehydro-3-deoxy-D-arabino-heptonate. Residue H264 coordinates Zn(2+). H268 (proton acceptor; for 3-dehydroquinate synthase activity) is an active-site residue. Positions 280 and 351 each coordinate 7-phospho-2-dehydro-3-deoxy-D-arabino-heptonate. A Zn(2+)-binding site is contributed by H280. The tract at residues 392–835 (VHPFANRHPE…WDVLHSKFNA (444 aa)) is EPSP synthase. Residues 854–1044 (DRSIVIIGMR…LPATRSTFVT (191 aa)) are shikimate kinase. Position 861–868 (861–868 (GMRAAGKT)) interacts with ATP. The segment at 1045-1258 (LTYPDLRKVP…IGVGQLSLKE (214 aa)) is 3-dehydroquinase. H1162 functions as the Proton acceptor; for 3-dehydroquinate dehydratase activity in the catalytic mechanism. The active-site Schiff-base intermediate with substrate; for 3-dehydroquinate dehydratase activity is K1191. Positions 1271-1551 (EKEFWVVGSP…KVIHSAVLNE (281 aa)) are shikimate dehydrogenase.

In the N-terminal section; belongs to the sugar phosphate cyclases superfamily. Dehydroquinate synthase family. It in the 2nd section; belongs to the EPSP synthase family. This sequence in the 3rd section; belongs to the shikimate kinase family. The protein in the 4th section; belongs to the type-I 3-dehydroquinase family. In the C-terminal section; belongs to the shikimate dehydrogenase family. In terms of assembly, homodimer. It depends on Zn(2+) as a cofactor.

The protein localises to the cytoplasm. The enzyme catalyses 7-phospho-2-dehydro-3-deoxy-D-arabino-heptonate = 3-dehydroquinate + phosphate. The catalysed reaction is 3-dehydroquinate = 3-dehydroshikimate + H2O. It catalyses the reaction shikimate + NADP(+) = 3-dehydroshikimate + NADPH + H(+). It carries out the reaction shikimate + ATP = 3-phosphoshikimate + ADP + H(+). The enzyme catalyses 3-phosphoshikimate + phosphoenolpyruvate = 5-O-(1-carboxyvinyl)-3-phosphoshikimate + phosphate. The protein operates within metabolic intermediate biosynthesis; chorismate biosynthesis; chorismate from D-erythrose 4-phosphate and phosphoenolpyruvate: step 2/7. Its pathway is metabolic intermediate biosynthesis; chorismate biosynthesis; chorismate from D-erythrose 4-phosphate and phosphoenolpyruvate: step 3/7. It participates in metabolic intermediate biosynthesis; chorismate biosynthesis; chorismate from D-erythrose 4-phosphate and phosphoenolpyruvate: step 4/7. It functions in the pathway metabolic intermediate biosynthesis; chorismate biosynthesis; chorismate from D-erythrose 4-phosphate and phosphoenolpyruvate: step 5/7. The protein operates within metabolic intermediate biosynthesis; chorismate biosynthesis; chorismate from D-erythrose 4-phosphate and phosphoenolpyruvate: step 6/7. Functionally, the AROM polypeptide catalyzes 5 consecutive enzymatic reactions in prechorismate polyaromatic amino acid biosynthesis. The protein is Pentafunctional AROM polypeptide 1 of Lodderomyces elongisporus (strain ATCC 11503 / CBS 2605 / JCM 1781 / NBRC 1676 / NRRL YB-4239) (Yeast).